A 156-amino-acid chain; its full sequence is Cyanate hydratase (156 aa).

Catalysis depends on residues Arg96, Glu99, and Ser122.

This sequence belongs to the cyanase family.

The catalysed reaction is cyanate + hydrogencarbonate + 3 H(+) = NH4(+) + 2 CO2. In terms of biological role, catalyzes the reaction of cyanate with bicarbonate to produce ammonia and carbon dioxide. The chain is Cyanate hydratase from Pseudomonas fluorescens (strain ATCC BAA-477 / NRRL B-23932 / Pf-5).